The chain runs to 131 residues: Snaclec coagulation factor IX/factor X-binding protein subunit A (131 aa).

The 131-residue stretch at 1 to 131 (DCLPGWSSHE…EEPQRFTCEI (131 aa)) folds into the C-type lectin domain. Cystine bridges form between Cys-2–Cys-13, Cys-30–Cys-129, and Cys-104–Cys-121. Residues Ser-41, Glu-43, and Glu-47 each coordinate Ca(2+). Glu-130 is a binding site for Ca(2+).

Belongs to the snaclec family. As to quaternary structure, heterodimer of subunits A and B; disulfide-linked. Expressed by the venom gland.

It localises to the secreted. In terms of biological role, anticoagulant protein which binds to coagulation factor IX (F9) and coagulation factor X (F10) in the presence of calcium. It may bind the gamma-carboxyglutamic acid-domain regions of factors with a 1 to 1 stoichiometry. The dissociation constant (K(d)) are 6.6 nM for factor IX (F9) and 125 nM for factor X (F10). Does not bind carbohydrates. In Echis carinatus (Saw-scaled viper), this protein is Snaclec coagulation factor IX/factor X-binding protein subunit A.